A 152-amino-acid chain; its full sequence is Protein FERTILITY RESTORER RF2, mitochondrial (152 aa).

The N-terminal 52 residues, 1–52, are a transit peptide targeting the mitochondrion; that stretch reads MSTLVTCSLPGAVTTHASTRRFGGSQFQTSQASCISFKREVSAKAVLRSVRC. Polar residues predominate over residues 52–69; the sequence is CNATQTQSAQRKSSTATV. The interval 52–101 is disordered; it reads CNATQTQSAQRKSSTATVKRSDPKGKTQGPKLDDGSGGFPPFRFGKGGGG.

It localises to the mitochondrion. In terms of biological role, non-functional allele of the RF2 fertility restorer of rice varieties with LD-type cytoplasmic male sterility (CMS). Non-functional RF2 alleles are found in japonica cultivars Taichung 65 and Nipponbare (AC F1SZ44), and is due to the presence of Thr-78 which replaces Ile-78 in the functional allele. Functional allele is found in the japonica cultivars Fukuyama and Owarihatamochi (AC F1SZ42), and indica cultivar Kasalath (AC F1SZ41). This Oryza sativa subsp. japonica (Rice) protein is Protein FERTILITY RESTORER RF2, mitochondrial.